Reading from the N-terminus, the 129-residue chain is Fluoride-specific ion channel FluC 1 (129 aa).

Transmembrane regions (helical) follow at residues alanine 43–valine 63, valine 68–tyrosine 88, and leucine 100–glycine 120. Glycine 78 and serine 81 together coordinate Na(+).

Belongs to the fluoride channel Fluc/FEX (TC 1.A.43) family.

The protein localises to the cell membrane. It catalyses the reaction fluoride(in) = fluoride(out). Its activity is regulated as follows. Na(+) is not transported, but it plays an essential structural role and its presence is essential for fluoride channel function. Functionally, fluoride-specific ion channel. Important for reducing fluoride concentration in the cell, thus reducing its toxicity. The polypeptide is Fluoride-specific ion channel FluC 1 (Frankia casuarinae (strain DSM 45818 / CECT 9043 / HFP020203 / CcI3)).